A 652-amino-acid polypeptide reads, in one-letter code: 2',3'-cyclic-nucleotide 2'-phosphodiesterase/3'-nucleotidase (652 aa).

Residues 1–24 (MFKRPLTLSLLASLIALTTSTAQA) form the signal peptide. 7 residues coordinate a divalent metal cation: D36, H38, D81, N121, H230, H262, and H264. Substrate is bound by residues Y445 and 549-555 (YRAYSGK).

Belongs to the 5'-nucleotidase family. Requires a divalent metal cation as cofactor.

The protein resides in the periplasm. The enzyme catalyses a nucleoside 2',3'-cyclic phosphate + H2O = a nucleoside 3'-phosphate + H(+). The catalysed reaction is a ribonucleoside 3'-phosphate + H2O = a ribonucleoside + phosphate. Its function is as follows. This bifunctional enzyme catalyzes two consecutive reactions during ribonucleic acid degradation. Converts a 2',3'-cyclic nucleotide to a 3'-nucleotide and then the 3'-nucleotide to the corresponding nucleoside and phosphate. In Yersinia enterocolitica, this protein is 2',3'-cyclic-nucleotide 2'-phosphodiesterase/3'-nucleotidase (cpdB).